We begin with the raw amino-acid sequence, 236 residues long: Nopaline transport system permease protein NocQ (236 aa).

The ABC transmembrane type-1 domain maps to 21 to 222; it reads AMMTVVVAAC…LLSSVSNRGF (202 aa). 4 consecutive transmembrane segments (helical) span residues 25-45, 63-83, 102-122, and 199-219; these read VVVAACSYFFGIIFGSLFAAA, VVRGVPELLIIFLVFFGGGTL, IFVIGVLCISVSAGAYATEVI, and QPFTFYITAFVIFLLLSSVSN.

It belongs to the binding-protein-dependent transport system permease family. HisMQ subfamily.

It localises to the cell inner membrane. Component of the nopaline active transport system probably consisting of four subunits: Q, M, P and T. This system is also capable of transporting octopine provided that catabolic functions are induced with nopaline. The chain is Nopaline transport system permease protein NocQ (nocQ) from Agrobacterium fabrum (strain C58 / ATCC 33970) (Agrobacterium tumefaciens (strain C58)).